The chain runs to 328 residues: Serine/threonine protein kinase RdoA (328 aa).

Aspartate 201 (proton acceptor) is an active-site residue. Positions 206 and 217 each coordinate Mg(2+). Residue aspartate 217 is part of the active site.

This sequence belongs to the SrkA/RdoA protein kinase family. In terms of assembly, monomer. It depends on Mg(2+) as a cofactor.

The protein resides in the cytoplasm. The enzyme catalyses L-seryl-[protein] + ATP = O-phospho-L-seryl-[protein] + ADP + H(+). The catalysed reaction is L-threonyl-[protein] + ATP = O-phospho-L-threonyl-[protein] + ADP + H(+). Functionally, a protein kinase that (auto)phosphorylates on Ser and Thr residues, probably involved in the extracytoplasmic stress response. Probably acts to suppress the effects of stress linked to accumulation of reactive oxygen species. The chain is Serine/threonine protein kinase RdoA from Salmonella typhimurium (strain LT2 / SGSC1412 / ATCC 700720).